Here is a 127-residue protein sequence, read N- to C-terminus: Translation initiation factor 5A (127 aa).

Residue lysine 35 is modified to Hypusine.

The protein belongs to the eIF-5A family.

The protein localises to the cytoplasm. Functionally, functions by promoting the formation of the first peptide bond. This is Translation initiation factor 5A from Methanococcoides burtonii (strain DSM 6242 / NBRC 107633 / OCM 468 / ACE-M).